We begin with the raw amino-acid sequence, 540 residues long: MAHKKTYSQLRSELLARYPVGLTKGGVSIDDIVQLRLQSPYESHLDVARAMASVMRADMAAYDRDTGKFTQSLGCWSGFHAQQMIKAVKRLRGTTKGAYVYLSGWMVAGLRNRWGHLPDQSMHEKTSVVDLIEEIYVSLRQADEVALNDLFNELKDARAKGATNKACEEIISRIDGFESHVVPIIADIDAGFGNEHATYLLAKEMIKAGACCLQIENQVSDAKQCGHQDGKVTVPREDFIEKLRACRLAFEELGVDDGVIVARTDSLGASLTQKIPVSQQAGDFASSYIKWLKTEPITDANPLSEGELAIWQSGNFARPIRMPNGLFSFREGTGRARVIEDCIASLKDGDADLIWIETDTPNVDEIASMVAEIRKQVPDAKLVYNNSPSFNWTLNLRKQVRAQWISEGKIAEADYPDGTALMSAQYDTSELGREADDRLRQFQVDISARAGVFHNLITLPTFHLTAKSTDELSHGYFGEDRMLAYVATVQREEIRRSISAVRHQHEVGSDLGDTFKEMVSGDRALKAGGAHNTMNQFAAE.

S103–W105 is a substrate binding site. D187 lines the Mg(2+) pocket. The active-site Proton acceptor is C225. Substrate contacts are provided by residues G226–H227, N385–S389, and T458.

Belongs to the isocitrate lyase/PEP mutase superfamily. Isocitrate lyase family. Homotetramer. The cofactor is Mg(2+).

It catalyses the reaction D-threo-isocitrate = glyoxylate + succinate. The protein operates within carbohydrate metabolism; glyoxylate cycle; (S)-malate from isocitrate: step 1/2. It participates in one-carbon metabolism; formaldehyde assimilation via serine pathway. In the presence of magnesium, inhibited by oxalate, potassium cyanide, manganese, silver, cadmium and to a lesser extent by succinate, glycolate, iodoacetamide, DL-penicillamine, aluminum, sodium, potassium, lithium and strontium. Its function is as follows. Involved in the metabolic adaptation in response to environmental changes. Catalyzes the reversible formation of succinate and glyoxylate from isocitrate, a key step of the glyoxylate cycle, which operates as an anaplerotic route for replenishing the tricarboxylic acid cycle during growth on fatty acid substrates. May be involved in the assimilation of one-carbon compounds via the isocitrate lyase-positive serine pathway. The chain is Isocitrate lyase from Hyphomicrobium methylovorum.